The following is a 135-amino-acid chain: Small ribosomal subunit protein uS9 (135 aa).

It belongs to the universal ribosomal protein uS9 family.

The polypeptide is Small ribosomal subunit protein uS9 (rps9) (Archaeoglobus fulgidus (strain ATCC 49558 / DSM 4304 / JCM 9628 / NBRC 100126 / VC-16)).